Reading from the N-terminus, the 248-residue chain is NADP-dependent 3-hydroxy acid dehydrogenase YdfG (248 aa).

Residues 7–12 (GATAGF), 32–33 (RR), 54–55 (DV), and Asn81 each bind NADP(+). Ser134 lines the substrate pocket. NADP(+)-binding positions include Tyr147, Lys151, and 177 to 185 (PGLVGGTEF). Tyr147 (proton acceptor) is an active-site residue.

The protein belongs to the short-chain dehydrogenases/reductases (SDR) family. In terms of assembly, homotetramer.

The enzyme catalyses 3-hydroxypropanoate + NADP(+) = 3-oxopropanoate + NADPH + H(+). It catalyses the reaction L-allo-threonine + NADP(+) = aminoacetone + CO2 + NADPH. NADP-dependent dehydrogenase with broad substrate specificity acting on 3-hydroxy acids. Catalyzes the NADP-dependent oxidation of L-allo-threonine to L-2-amino-3-keto-butyrate, which is spontaneously decarboxylated into aminoacetone. Also acts on D-threonine, L-serine, D-serine, D-3-hydroxyisobutyrate, L-3-hydroxyisobutyrate, D-glycerate and L-glycerate. Able to catalyze the reduction of the malonic semialdehyde to 3-hydroxypropionic acid. YdfG is apparently supplementing RutE, the presumed malonic semialdehyde reductase involved in pyrimidine degradation since both are able to detoxify malonic semialdehyde. The protein is NADP-dependent 3-hydroxy acid dehydrogenase YdfG of Salmonella typhi.